Consider the following 95-residue polypeptide: Ribosome-binding factor A (95 aa).

Belongs to the RbfA family. In terms of assembly, interacts with the 30S ribosomal subunit as a monomer, binding in a position overlapping the sites of the A and P site tRNAs, and displacing segments of the 16S rRNA. Probably contacts 16S rRNA and ribosomal protein S9 and S13.

It is found in the cytoplasm. Its function is as follows. One of several proteins that assist in the late maturation steps of the functional core of the 30S ribosomal subunit. Associates with free 30S ribosomal subunits (but not with 30S subunits that are part of 70S ribosomes or polysomes). Required for efficient processing of 16S rRNA. Probably interacts with the 5'-terminal helix region of 16S rRNA, bringing together different domains of the 30S ribosomal subunit which aids assembly. The sequence is that of Ribosome-binding factor A from Thermus thermophilus (strain ATCC 27634 / DSM 579 / HB8).